The chain runs to 461 residues: Chromosomal replication initiator protein DnaA (461 aa).

The domain I, interacts with DnaA modulators stretch occupies residues 1-87 (MAVSLWQQCI…IGSRPSAKPV (87 aa)). Residues 87–124 (VVQATAAVRTSRPVTREVTKPSFNTPHAEPMANANHRS) form a domain II region. Residues 99–125 (PVTREVTKPSFNTPHAEPMANANHRSN) are disordered. Residues 125–341 (NINPTYQFDN…GALNRVIANA (217 aa)) form a domain III, AAA+ region region. Gly169, Gly171, Lys172, and Thr173 together coordinate ATP. A domain IV, binds dsDNA region spans residues 342–461 (NFTGRPITID…YANLIRTLSS (120 aa)).

This sequence belongs to the DnaA family. In terms of assembly, oligomerizes as a right-handed, spiral filament on DNA at oriC.

It is found in the cytoplasm. Plays an essential role in the initiation and regulation of chromosomal replication. ATP-DnaA binds to the origin of replication (oriC) to initiate formation of the DNA replication initiation complex once per cell cycle. Binds the DnaA box (a 9 base pair repeat at the origin) and separates the double-stranded (ds)DNA. Forms a right-handed helical filament on oriC DNA; dsDNA binds to the exterior of the filament while single-stranded (ss)DNA is stabiized in the filament's interior. The ATP-DnaA-oriC complex binds and stabilizes one strand of the AT-rich DNA unwinding element (DUE), permitting loading of DNA polymerase. After initiation quickly degrades to an ADP-DnaA complex that is not apt for DNA replication. Binds acidic phospholipids. This Shewanella pealeana (strain ATCC 700345 / ANG-SQ1) protein is Chromosomal replication initiator protein DnaA.